A 154-amino-acid polypeptide reads, in one-letter code: UPF0756 membrane protein CKR_1028 (154 aa).

Helical transmembrane passes span Ile5–Ala25, Asn48–Gly68, Trp82–Met102, and Ile113–Val133.

It belongs to the UPF0756 family.

It localises to the cell membrane. The chain is UPF0756 membrane protein CKR_1028 from Clostridium kluyveri (strain NBRC 12016).